The chain runs to 101 residues: Aspartyl/glutamyl-tRNA(Asn/Gln) amidotransferase subunit C (101 aa).

This sequence belongs to the GatC family. As to quaternary structure, heterotrimer of A, B and C subunits.

It carries out the reaction L-glutamyl-tRNA(Gln) + L-glutamine + ATP + H2O = L-glutaminyl-tRNA(Gln) + L-glutamate + ADP + phosphate + H(+). The catalysed reaction is L-aspartyl-tRNA(Asn) + L-glutamine + ATP + H2O = L-asparaginyl-tRNA(Asn) + L-glutamate + ADP + phosphate + 2 H(+). Allows the formation of correctly charged Asn-tRNA(Asn) or Gln-tRNA(Gln) through the transamidation of misacylated Asp-tRNA(Asn) or Glu-tRNA(Gln) in organisms which lack either or both of asparaginyl-tRNA or glutaminyl-tRNA synthetases. The reaction takes place in the presence of glutamine and ATP through an activated phospho-Asp-tRNA(Asn) or phospho-Glu-tRNA(Gln). The polypeptide is Aspartyl/glutamyl-tRNA(Asn/Gln) amidotransferase subunit C (Lactococcus lactis subsp. cremoris (strain MG1363)).